A 195-amino-acid polypeptide reads, in one-letter code: dITP/XTP pyrophosphatase (195 aa).

Position 7–12 (7–12) interacts with substrate; that stretch reads SSNKGK. 2 residues coordinate Mg(2+): Glu-38 and Asp-68. The active-site Proton acceptor is Asp-68. Residues Ser-69, 150 to 153, Lys-173, and 178 to 179 contribute to the substrate site; these read FGYD and HR.

This sequence belongs to the HAM1 NTPase family. In terms of assembly, homodimer. The cofactor is Mg(2+).

The enzyme catalyses XTP + H2O = XMP + diphosphate + H(+). It catalyses the reaction dITP + H2O = dIMP + diphosphate + H(+). It carries out the reaction ITP + H2O = IMP + diphosphate + H(+). Its function is as follows. Pyrophosphatase that catalyzes the hydrolysis of nucleoside triphosphates to their monophosphate derivatives, with a high preference for the non-canonical purine nucleotides XTP (xanthosine triphosphate), dITP (deoxyinosine triphosphate) and ITP. Seems to function as a house-cleaning enzyme that removes non-canonical purine nucleotides from the nucleotide pool, thus preventing their incorporation into DNA/RNA and avoiding chromosomal lesions. The polypeptide is dITP/XTP pyrophosphatase (Nautilia profundicola (strain ATCC BAA-1463 / DSM 18972 / AmH)).